Here is a 156-residue protein sequence, read N- to C-terminus: ATP synthase subunit b (156 aa).

The helical transmembrane segment at 7–29 threads the bilayer; that stretch reads LFAQMVVFLVLAWFTMKFVWPPL.

Belongs to the ATPase B chain family. In terms of assembly, F-type ATPases have 2 components, F(1) - the catalytic core - and F(0) - the membrane proton channel. F(1) has five subunits: alpha(3), beta(3), gamma(1), delta(1), epsilon(1). F(0) has three main subunits: a(1), b(2) and c(10-14). The alpha and beta chains form an alternating ring which encloses part of the gamma chain. F(1) is attached to F(0) by a central stalk formed by the gamma and epsilon chains, while a peripheral stalk is formed by the delta and b chains.

The protein resides in the cell inner membrane. F(1)F(0) ATP synthase produces ATP from ADP in the presence of a proton or sodium gradient. F-type ATPases consist of two structural domains, F(1) containing the extramembraneous catalytic core and F(0) containing the membrane proton channel, linked together by a central stalk and a peripheral stalk. During catalysis, ATP synthesis in the catalytic domain of F(1) is coupled via a rotary mechanism of the central stalk subunits to proton translocation. Its function is as follows. Component of the F(0) channel, it forms part of the peripheral stalk, linking F(1) to F(0). In Burkholderia lata (strain ATCC 17760 / DSM 23089 / LMG 22485 / NCIMB 9086 / R18194 / 383), this protein is ATP synthase subunit b.